The primary structure comprises 3079 residues: Inhibitory regulator protein IRA2 (3079 aa).

Positions 392-554 (NQNAHQGSSS…RASYDAHKTG (163 aa)) are disordered. Low complexity predominate over residues 399–416 (SSSPSSSSPSSPPSSSSS). Polar residues predominate over residues 417–442 (DNNNQNIIAKSLSRQLSHHQSYIQQQ). Over residues 449-477 (SSWTTNSQSSTSLSSSTSNSTTTDFSTHT) the composition is skewed to low complexity. Residues 488–497 (DTPTMSNITI) are compositionally biased toward polar residues. Positions 498–528 (SASSLLSQTPTPTTQLQQRLNSAAAAAAAAA) are enriched in low complexity. A compositionally biased stretch (polar residues) spans 529 to 546 (SPSNSTPTGYTAEQQSRA). Thr635 carries the phosphothreonine modification. 3 disordered regions span residues 867–898 (FKGS…PLGL), 912–935 (GSST…LSSD), and 952–980 (GPSS…VQRP). Low complexity-rich tracts occupy residues 873–894 (SLCS…TPVS) and 921–934 (NVNS…NLSS). A compositionally biased stretch (polar residues) spans 961–980 (IPTTLTSPPGTEKSSPVQRP). Positions 1717–1922 (NATHIVVAQL…DRIFRFLAEL (206 aa)) constitute a Ras-GAP domain.

Its subcellular location is the cytoplasm. In terms of biological role, inhibitory regulator of the Ras-cyclic AMP pathway. Stimulates the GTPase activity of Ras proteins. The chain is Inhibitory regulator protein IRA2 (IRA2) from Saccharomyces cerevisiae (strain ATCC 204508 / S288c) (Baker's yeast).